The chain runs to 133 residues: Small ribosomal subunit protein uS15 (133 aa).

It belongs to the universal ribosomal protein uS15 family. As to quaternary structure, part of the 30S ribosomal subunit.

The chain is Small ribosomal subunit protein uS15 from Methanosphaera stadtmanae (strain ATCC 43021 / DSM 3091 / JCM 11832 / MCB-3).